Here is a 426-residue protein sequence, read N- to C-terminus: Serine--tRNA ligase (426 aa).

Residue 230–232 (TSE) participates in L-serine binding. 261-263 (RSE) contacts ATP. Residue glutamate 284 participates in L-serine binding. 348–351 (EISS) is a binding site for ATP. Position 384 (serine 384) interacts with L-serine.

It belongs to the class-II aminoacyl-tRNA synthetase family. Type-1 seryl-tRNA synthetase subfamily. As to quaternary structure, homodimer. The tRNA molecule binds across the dimer.

The protein resides in the cytoplasm. The catalysed reaction is tRNA(Ser) + L-serine + ATP = L-seryl-tRNA(Ser) + AMP + diphosphate + H(+). It carries out the reaction tRNA(Sec) + L-serine + ATP = L-seryl-tRNA(Sec) + AMP + diphosphate + H(+). The protein operates within aminoacyl-tRNA biosynthesis; selenocysteinyl-tRNA(Sec) biosynthesis; L-seryl-tRNA(Sec) from L-serine and tRNA(Sec): step 1/1. Catalyzes the attachment of serine to tRNA(Ser). Is also able to aminoacylate tRNA(Sec) with serine, to form the misacylated tRNA L-seryl-tRNA(Sec), which will be further converted into selenocysteinyl-tRNA(Sec). This is Serine--tRNA ligase from Sphingopyxis alaskensis (strain DSM 13593 / LMG 18877 / RB2256) (Sphingomonas alaskensis).